Consider the following 242-residue polypeptide: Venom nerve growth factor 2 (242 aa).

A signal peptide spans 1–18 (MSMLCYTLIIAFLIGIWA). Positions 19–125 (APQSEDNVPL…ALNRNIQAKR (107 aa)) are excised as a propeptide. Positions 47 to 66 (DLKTSRNTDQRHPAPKKADD) are enriched in basic and acidic residues. The tract at residues 47–70 (DLKTSRNTDQRHPAPKKADDQELG) is disordered. 3 cysteine pairs are disulfide-bonded: Cys-139–Cys-203, Cys-181–Cys-231, and Cys-191–Cys-233.

It belongs to the NGF-beta family. As to quaternary structure, homodimer; non-covalently linked. Expressed by the venom gland.

It is found in the secreted. Functionally, nerve growth factor is important for the development and maintenance of the sympathetic and sensory nervous systems. It stimulates division and differentiation of sympathetic and embryonic sensory neurons as well as basal forebrain cholinergic neurons in the brain. Its relevance in the snake venom is not clear. However, it has been shown to inhibit metalloproteinase-dependent proteolysis of platelet glycoprotein Ib alpha, suggesting a metalloproteinase inhibition to prevent metalloprotease autodigestion and/or protection against prey proteases. Binds a lipid between the two protein chains in the homodimer. The lipid-bound form promotes histamine relase from mouse mast cells, contrary to the lipid-free form. The polypeptide is Venom nerve growth factor 2 (Pseudechis australis (Mulga snake)).